We begin with the raw amino-acid sequence, 49 residues long: Disintegrin echistatin-gamma (49 aa).

One can recognise a Disintegrin domain in the interval 1-47 (DCASGPCCRDCKFLEEGTICNMARGDDMDDYCNGKTCDCPRNPHKWP). 4 disulfides stabilise this stretch: C2–C11, C7–C32, C8–C37, and C20–C39. The Cell attachment site signature appears at 24-26 (RGD).

The protein belongs to the venom metalloproteinase (M12B) family. P-II subfamily. P-IIa sub-subfamily. Monomer. As to expression, expressed by the venom gland.

It localises to the secreted. In terms of biological role, has antiplatelet activities on guinea pig, followed by human, rabbit and rat platelet-rich plasma. The sequence is that of Disintegrin echistatin-gamma from Echis pyramidum leakeyi (Leakey's carpet viper).